A 282-amino-acid polypeptide reads, in one-letter code: Para-Rep C2 (282 aa).

Residues 1–99 (MASKRWCFTL…ETLIAEIGAP (99 aa)) enclose the CRESS-DNA virus Rep endonuclease domain. Positions 7 to 10 (CFTL) match the RCR-1 motif. E38 and H47 together coordinate a divalent metal cation. Positions 47-49 (HLQ) match the RCR-2 motif. The Nuclear localization signal motif lies at 56–77 (KLIRLGGLKKKFGSIAHWEIAK). Y86 (for DNA cleavage activity) is an active-site residue. An RCR-3 motif is present at residues 86–89 (YCTK). Residues 99 to 105 (PVKKGSN) carry the Nuclear localization signal motif. 174-182 (GPDGGEGKS) contributes to the ATP binding site.

This sequence belongs to the nanoviridea/circoviridae replication-associated protein family. In terms of assembly, homooligomer (Potential). Rep binds to repeated DNA motifs (iterons). Requires Mg(2+) as cofactor. The cofactor is Mn(2+).

Its subcellular location is the host nucleus. The enzyme catalyses ATP + H2O = ADP + phosphate + H(+). Functionally, initiates and terminates the replication only of its own subviral DNA molecule. The closed circular ssDNA genome is first converted to a superhelical dsDNA. Rep binds a specific hairpin at the genome origin of replication. Introduces an endonucleolytic nick within the intergenic region of the genome, thereby initiating the rolling circle replication (RCR). Following cleavage, binds covalently to the 5'-phosphate of DNA as a tyrosyl ester. The cleavage gives rise to a free 3'-OH that serves as a primer for the cellular DNA polymerase. The polymerase synthesizes the (+) strand DNA by rolling circle mechanism. After one round of replication, a Rep-catalyzed nucleotidyl transfer reaction releases a circular single-stranded virus genome, thereby terminating the replication. Displays origin-specific DNA cleavage, nucleotidyl transferase, ATPase and helicase activities. The sequence is that of Para-Rep C2 (C2) from Milk vetch dwarf C2 alphasatellite (MVDC2A).